Consider the following 654-residue polypeptide: Transcription factor E2-alpha (654 aa).

The 9aaTAD motif lies at 19–27; that stretch reads LLDFSMMFP. Residues 31-103 form a disordered region; it reads TNGKGRPASL…LGPGLGGKSG (73 aa). The segment covering 55–68 has biased composition (low complexity); that stretch reads SSGSWGSGDQSSSS. The span at 69–79 shows a compositional bias: polar residues; it reads FDPSRTFSEGT. Residues 84-94 are compositionally biased toward low complexity; that stretch reads SHSSLSSSTFL. 2 positions are modified to phosphoserine: Ser-134 and Ser-139. Disordered regions lie at residues 135-205, 239-268, 292-329, and 343-385; these read PGPL…SAKT, MLGGGSSPLPLPPGSGPVGSSGSSSTFGGL, SFSSAPGATYGGVSSHTPPVSGADSLLGSRGTTAGSSG, and DHSS…YDGG. The segment covering 147–156 has biased composition (low complexity); the sequence is SQYYPSYSGS. The Nuclear localization signal motif lies at 170–176; the sequence is PKKVRKV. Positions 256-268 are enriched in low complexity; that stretch reads VGSSGSSSTFGGL. The span at 343–354 shows a compositional bias: low complexity; sequence DHSSNNFSSSPS. Thr-355 is modified (phosphothreonine). The residue at position 359 (Ser-359) is a Phosphoserine. Residue Arg-371 is modified to Omega-N-methylarginine. Position 379 is a phosphoserine (Ser-379). Residues 389–425 are leucine-zipper; that stretch reads LQSKIEDHLDEAIHVLRSHAVGTAGDMHTLLPGHGAL. Positions 461-552 are disordered; sequence NHAALPSQPG…KAEREKERRV (92 aa). Lys-498 is covalently cross-linked (Glycyl lysine isopeptide (Lys-Gly) (interchain with G-Cter in SUMO2)). The segment covering 512–523 has biased composition (basic and acidic residues); the sequence is DHSEEEKKELKA. Ser-529 carries the post-translational modification Phosphoserine. A Phosphothreonine modification is found at Asp-531. The span at 542–552 shows a compositional bias: basic and acidic residues; sequence QKAEREKERRV. One can recognise a bHLH domain in the interval 549–602; that stretch reads ERRVANNARERLRVRDINEAFKELGRMCQLHLNSEKPQTKLLILHQAVSVILNL. Residue Lys-625 forms a Glycyl lysine isopeptide (Lys-Gly) (interchain with G-Cter in SUMO2) linkage. The interval 633–654 is disordered; the sequence is PQMVLSAPHPGLSEAHNPAGHM.

In terms of assembly, homodimer. Heterodimer; efficient DNA binding requires dimerization with another bHLH protein. Forms a heterodimer with ASH1, TWIST1 and TWIST2. Forms a heterodimer with MYOG; heterodimerization enhances MYOG DNA-binding and transcriptional activities. Forms a heterodimer with NEUROD1; the heterodimer is inhibited in presence of ID2, but not NR0B2, to E-box element. Forms a heterodimer with TCF15; the heterodimer binds E-box element. Forms a heterodimer with ATOH8; repress transcription of TCF3 and TCF3/NEUROG3 dimer-induced transactivation of E box-dependent promoters. Component of a nuclear TAL-1 complex composed at least of CBFA2T3, LDB1, TAL1 and TCF3. Interacts with NEUROD2, PTF1A and TGFB1I1. Interacts with EP300 and UBE2I. Interacts with BHLHA9. Interacts with ASB2; the interaction is mediated by SKP2 and targets TCF3 for Notch-induced proteasomal degradation. As to quaternary structure, forms a heterodimer with ATOH7; required for ATOH7 DNA-binding. Interacts with RALGAPA1 and FIGLA. In terms of processing, phosphorylated following NGF stimulation. Undergoes Notch-induced ubiquitination and subsequent proteasomal degradation which is mediated by ASB1 or ASB2, the substrate-recognition components of probable ECS E3 ubiquitin-protein ligase complexes.

The protein localises to the nucleus. In terms of biological role, transcriptional regulator involved in the initiation of neuronal differentiation and mesenchymal to epithelial transition. Heterodimers between TCF3 and tissue-specific basic helix-loop-helix (bHLH) proteins play major roles in determining tissue-specific cell fate during embryogenesis, like muscle or early B-cell differentiation. Together with TCF15, required for the mesenchymal to epithelial transition. Dimers bind DNA on E-box motifs: 5'-CANNTG-3'. Binds to the kappa-E2 site in the kappa immunoglobulin gene enhancer. Binds to IEB1 and IEB2, which are short DNA sequences in the insulin gene transcription control region. Its function is as follows. Facilitates ATOH7 binding to DNA at the consensus sequence 5'-CAGGTG-3', and positively regulates transcriptional activity. This Homo sapiens (Human) protein is Transcription factor E2-alpha (TCF3).